The chain runs to 608 residues: MSETLSNIVSKNMTNDKNSLESMNISSSSSAEENPKKQAKKXKERGPDPSANPFHLSGDVDFFLLRDQERNKALSERQQQKTMRVHEKMTYSSKVLAKHTSLRRQLQLEDKQEDLEARTEADHLRAFRDYNTWKLTLTKEKNVEPENMSGYLKQKRQMFLLQYTLDCKRREIQRLETLATKEEARLQQAEKSLAKDAALFDEFLRENDCSSVQAMKAAEKETKAKIEKILEIRDLTTQIVNIKSEISRFEDTLQHYKVYKDFLYKLSPKEWLEEQEKKHLFLKNAKEISEASKDGSVNSTPGDKGPGIKGKASSVWAKEGQGTKKPWRFLRLGRSLSYLSSPQQGSQPSESSGGNSRGSNSPIPLTQEDTDSDGEEPQLYFTEPQQLLDVFRELEEQNLSLIQNRQEMEETLEELSRTLKHTQIRMDREVNQLKQWVSTMMMSITKEEDTAAELELKARVFHFGEYKGDQQDKLLESLNWKVLDVYRNCIGTQQEANLGTVQMLTIIEHQLDELLENLERVPQVKIEQAERAKEKERRIRLREEKLQMQKILQEERLQRARARAQAEIKKKRGRTLVCRSQPPVHRIKQESEHTLMDKEKEELLFFFT.

Polar residues predominate over residues methionine 1 to lysine 17. Positions methionine 1–serine 57 are disordered. Residues leucine 20–glutamate 32 show a composition bias toward low complexity. 2 coiled-coil regions span residues threonine 164 to aspartate 196 and leucine 230 to lysine 257. Disordered stretches follow at residues alanine 291 to glycine 320 and leucine 339 to proline 377. A compositionally biased stretch (low complexity) spans leucine 339–serine 361. Coiled-coil stretches lie at residues glutamine 385–glutamine 435 and threonine 500–threonine 575.

This sequence belongs to the CFAP100 family.

The protein resides in the cytoplasm. Its subcellular location is the cytoskeleton. The protein localises to the cilium axoneme. Functionally, may play a role in ciliary/flagellar motility by regulating the assembly and the activity of axonemal inner dynein arm. In Macaca fascicularis (Crab-eating macaque), this protein is Cilia- and flagella-associated protein 100.